The chain runs to 200 residues: 3-isopropylmalate dehydratase small subunit (200 aa).

Belongs to the LeuD family. LeuD type 1 subfamily. In terms of assembly, heterodimer of LeuC and LeuD.

It carries out the reaction (2R,3S)-3-isopropylmalate = (2S)-2-isopropylmalate. It participates in amino-acid biosynthesis; L-leucine biosynthesis; L-leucine from 3-methyl-2-oxobutanoate: step 2/4. In terms of biological role, catalyzes the isomerization between 2-isopropylmalate and 3-isopropylmalate, via the formation of 2-isopropylmaleate. The protein is 3-isopropylmalate dehydratase small subunit of Actinobacillus pleuropneumoniae serotype 7 (strain AP76).